The sequence spans 252 residues: Probable transcriptional regulatory protein RT0442 (252 aa).

The tract at residues 1–22 (MSGHSKFKNIQHRKGAQDKKKS) is disordered.

The protein belongs to the TACO1 family.

Its subcellular location is the cytoplasm. In Rickettsia typhi (strain ATCC VR-144 / Wilmington), this protein is Probable transcriptional regulatory protein RT0442.